Reading from the N-terminus, the 197-residue chain is DnaJ homolog subfamily C member 5 (197 aa).

The J domain occupies 13–82 (GESLYHVLGL…RNIYDKYGSL (70 aa)). Residues 153-197 (EDLEAQMQSDERDTEGPVLVQPASATETTQLTSDSHASYHTDGFN) form a disordered region. Over residues 175–197 (ASATETTQLTSDSHASYHTDGFN) the composition is skewed to polar residues.

Palmitoylated. Palmitoylation occurs probably in the cysteine-rich domain and regulates DNAJC5 stable membrane attachment.

The protein localises to the cytoplasm. It is found in the cytosol. It localises to the membrane. Its subcellular location is the cytoplasmic vesicle. The protein resides in the secretory vesicle. The protein localises to the chromaffin granule membrane. It is found in the melanosome. It localises to the cell membrane. Its function is as follows. May have an important role in presynaptic function. May be involved in calcium-dependent neurotransmitter release at nerve endings. In Xenopus laevis (African clawed frog), this protein is DnaJ homolog subfamily C member 5.